A 308-amino-acid polypeptide reads, in one-letter code: uncharacterized protein (308 aa).

The 232-residue stretch at 5 to 236 (LELQQLKKTY…LKSETFILDL (232 aa)) folds into the ABC transporter domain. Position 38 to 45 (38 to 45 (GPNGAGKS)) interacts with ATP.

Belongs to the ABC transporter superfamily.

This is an uncharacterized protein from Escherichia coli (strain K12).